We begin with the raw amino-acid sequence, 217 residues long: Large ribosomal subunit protein uL3 (217 aa).

The disordered stretch occupies residues 131–155; sequence FSSSRASHGNSRSHNVPGSIGMAQD. The span at 132-145 shows a compositional bias: low complexity; sequence SSSRASHGNSRSHN. Glutamine 154 carries the post-translational modification N5-methylglutamine.

It belongs to the universal ribosomal protein uL3 family. Part of the 50S ribosomal subunit. Forms a cluster with proteins L14 and L19. In terms of processing, methylated by PrmB.

Its function is as follows. One of the primary rRNA binding proteins, it binds directly near the 3'-end of the 23S rRNA, where it nucleates assembly of the 50S subunit. This Nitrosomonas eutropha (strain DSM 101675 / C91 / Nm57) protein is Large ribosomal subunit protein uL3.